We begin with the raw amino-acid sequence, 728 residues long: Fibulin-1 (728 aa).

Positions 1 to 17 (MRICFLLLAFLVAETFA) are cleaved as a signal peptide. 30 disulfide bridges follow: C23/C49, C24/C56, C37/C57, C66/C94, C79/C95, C97/C121, C98/C128, C111/C129, C159/C168, C164/C178, C180/C279, C285/C298, C292/C307, C347/C359, C353/C368, C375/C388, C394/C404, C399/C413, C415/C428, C434/C448, C442/C457, C459/C472, C478/C489, C485/C498, C500/C513, C519/C534, C530/C543, C545/C558, C564/C576, and C569/C585. Anaphylatoxin-like domains follow at residues 23–64 (CCAG…LLDN), 65–96 (ACDS…ECCD), and 97–129 (CCLL…NKCC). Positions 155-194 (LGDRCASSHCEHLCHDRGGEKVECSCRSGFDLAPDGMACV) constitute an EGF-like 1 domain. In terms of domain architecture, EGF-like 2; calcium-binding spans 195 to 280 (DRNECLTRQS…GWLFQHGHCV (86 aa)). Residues 281 to 344 (DVDECNLGSH…YPKNGMCNDI (64 aa)) enclose the EGF-like 3; calcium-binding domain. The 47-residue stretch at 343 to 389 (DIDECVTGHNCGAGEECVNTPGSFRCQQKGNLCAHGYEVNGATGFCE) folds into the EGF-like 4; calcium-binding domain. In terms of domain architecture, EGF-like 5; calcium-binding spans 390–429 (DVNECQQGVCGSMECINLPGTYKCKCGPGYEFNDAKKRCE). An EGF-like 6; calcium-binding domain is found at 430–473 (DVDECIKFAGHVCDLSAECINTIGSFECKCKPGFQLASDGRRCE). Residues 474-514 (DVNECTTGIAACEQKCVNIPGSYQCICDRGFALGPDGTKCE) enclose the EGF-like 7; calcium-binding domain. The EGF-like 8; calcium-binding domain occupies 515 to 559 (DIDECSIWAGSGNDLCMGGCINTKGSYLCQCPPGYKIQPDGRTCV). An EGF-like 9; calcium-binding domain is found at 560–610 (DVDECAMGECAGSDKVCVNTLGSFKCHSIDCPTNYIHDSLNKNQIADGYSC). N624 carries N-linked (GlcNAc...) asparagine glycosylation.

It belongs to the fibulin family. As to quaternary structure, homomultimerizes and interacts with various extracellular matrix components. As to expression, expressed in head muscle cells, anterior and posterior intestinal cells. Isoform a: Expressed in male and hermaphrodite gonad, anterior and posterior intestine and pharyngeal basement membranes, body-wall muscle, GLR cells, uterine attachment and mechanosensory neurons. Isoform c: Expressed on ALM/PLM mechanosensory neuron attachments, in flexible tracks connecting the pharyngeal, body-wall-muscle basement membranes and in uterine attachments.

The protein resides in the secreted. The protein localises to the extracellular space. It is found in the extracellular matrix. It localises to the basement membrane. Functionally, incorporated into fibronectin-containing matrix fibers. Plays a role in cell adhesion and migration along protein fibers within the extracellular matrix (ECM). Important for certain developmental processes and contributes to the supramolecular organization of ECM architecture, in particular to those of basement membranes. In terms of biological role, involved in regulating the shape and adhesion of cells in the developing pharynx, intestine, body-wall muscle and gonadal tissue. During gonadogenesis, regulates the width of gonads and the migration of distal tip cells (DTC). Together with type IV collagen let-2 and downstream of metalloprotease mig-17, recruits nidogen nid-1 to the gonad basement membrane thereby inducing basement membrane remodeling required for the directional migration of DTCs. Acts antagonistically with metalloprotease gon-1 to maintain optimal levels of type IV collagen emb-9 in the gonad basement membrane during gonadogenesis. Required for larval development. Its function is as follows. Involved in the assembly of the flexible hemicentin-containing tracks found joining the pharynx and body-wall-muscle basement membranes. In Caenorhabditis elegans, this protein is Fibulin-1 (fbl-1).